The chain runs to 583 residues: Radixin (583 aa).

Positions 5 to 295 (INVRVTTMDA…GNHELYMRRR (291 aa)) constitute an FERM domain. Residue 60–63 (KLNK) coordinates a 1,2-diacyl-sn-glycero-3-phospho-(1D-myo-inositol). The residue at position 83 (Lys83) is an N6-succinyllysine. Lys278 contributes to the a 1,2-diacyl-sn-glycero-3-phospho-(1D-myo-inositol) binding site. Disordered regions lie at residues 309–336 (AREEKHQKQLERAQLENEKKKREIAEKE), 374–407 (ELDQERKRAKEEAERLEKERQAAEEAKSALAKQA), and 460–526 (KEEL…RVKK). Residues 374 to 400 (ELDQERKRAKEEAERLEKERQAAEEAK) are compositionally biased toward basic and acidic residues. Over residues 469–480 (APPPPPPPPVIP) the composition is skewed to pro residues. Basic and acidic residues-rich tracts occupy residues 483–492 (ENEHDEHDEN) and 506–525 (MNHRSEEERVTETQKNERVK). A Phosphothreonine; by ROCK2 modification is found at Thr564.

As to quaternary structure, interacts with CPNE1 (via VWFA domain) and CPNE4 (via VWFA domain). Binds NHERF1. Interacts with NHERF1, NHERF2, LAYN, MME/NEP and ICAM2. Interacts (via FERM domain) with SPN/CD43 cytoplasmic tail. Interacts with CD44. Interacts with CLIC5; may work together in a complex which also includes EZR and MYO6 to stabilize linkages between the plasma membrane and subjacent actin cytoskeleton at the base of stereocilia. In terms of processing, phosphorylated by tyrosine-protein kinases. Phosphorylation by ROCK2 suppresses the head-to-tail association of the N-terminal and C-terminal halves resulting in an opened conformation which is capable of actin and membrane-binding.

It localises to the cell membrane. The protein localises to the cytoplasm. The protein resides in the cytoskeleton. It is found in the cleavage furrow. Its subcellular location is the cell projection. It localises to the microvillus. The protein localises to the stereocilium. With respect to regulation, a head-to-tail association, of the N-terminal and C-terminal halves results in a closed conformation (inactive form) which is incapable of actin or membrane-binding. Its function is as follows. Probably plays a crucial role in the binding of the barbed end of actin filaments to the plasma membrane. The chain is Radixin (RDX) from Bos taurus (Bovine).